The sequence spans 745 residues: uncharacterized protein (745 aa).

An HTH araC/xylS-type domain is found at 158–256 (NQVCDYIELH…HQTPKQYRGD (99 aa)). DNA-binding regions (H-T-H motif) lie at residues 175–196 (SELS…AESL) and 223–246 (ITDI…KHFT).

This is an uncharacterized protein from Staphylococcus aureus (strain MRSA252).